The sequence spans 404 residues: Argininosuccinate synthase (404 aa).

Residues 13–21 (AYSGGLDTS) and Ala-41 each bind ATP. Tyr-93 and Ser-98 together coordinate L-citrulline. Gly-123 provides a ligand contact to ATP. Positions 125, 129, and 130 each coordinate L-aspartate. Asn-129 lines the L-citrulline pocket. L-citrulline is bound by residues Arg-133, Ser-182, Ser-191, Glu-267, and Tyr-279.

The protein belongs to the argininosuccinate synthase family. Type 1 subfamily. In terms of assembly, homotetramer.

It is found in the cytoplasm. It carries out the reaction L-citrulline + L-aspartate + ATP = 2-(N(omega)-L-arginino)succinate + AMP + diphosphate + H(+). The protein operates within amino-acid biosynthesis; L-arginine biosynthesis; L-arginine from L-ornithine and carbamoyl phosphate: step 2/3. This chain is Argininosuccinate synthase, found in Moritella profunda.